The following is a 130-amino-acid chain: Small ribosomal subunit protein uS8 (130 aa).

This sequence belongs to the universal ribosomal protein uS8 family. As to quaternary structure, part of the 30S ribosomal subunit. Contacts proteins S5 and S12.

Its function is as follows. One of the primary rRNA binding proteins, it binds directly to 16S rRNA central domain where it helps coordinate assembly of the platform of the 30S subunit. The chain is Small ribosomal subunit protein uS8 from Actinobacillus pleuropneumoniae serotype 5b (strain L20).